Consider the following 721-residue polypeptide: Vacuolar transporter chaperone complex subunit 4 (721 aa).

In terms of domain architecture, SPX spans 1-148 (MKFGEHLSKS…GFILKPVFQV (148 aa)). The Cytoplasmic portion of the chain corresponds to 1-630 (MKFGEHLSKS…PKVYFATERT (630 aa)). A Glycyl lysine isopeptide (Lys-Gly) (interchain with G-Cter in ubiquitin) cross-link involves residue Lys75. The segment at 126–133 (GFQKIIKK) is important for inositol polyphosphate binding. ATP is bound by residues Lys200, Arg264, Arg266, Lys281, Lys294, Tyr359, and Arg361. Residue Glu426 participates in Mn(2+) binding. The active site involves Lys458. The segment at 489–512 (PLPTNIEITRPGRSDNEDNDFDED) is disordered. 2 helical membrane-spanning segments follow: residues 631–651 (YLSWLSISILLGGVSTTLLTY) and 652–672 (GSPTAMIGSIGFFITSLAVLI). Residues 673–699 (RTVMVYAKRVVNIRLKRAVDYEDKIGP) lie on the Cytoplasmic side of the membrane. The chain crosses the membrane as a helical span at residues 700–720 (GMVSVFLILSILFSFFCNLVA). A topological domain (vacuolar) is located at residue Lys721.

Belongs to the VTC4 family. In terms of assembly, the VTC core complex is an integral membrane heterooligomer composed of the catalytic subunit VTC4 and the accessory subunits VTC1, VTC2 and VTC3. The complex exists in 2 different sub-complexes: VTC1-VTC2-VCT4 and VCT1-VTC3-VTC4. The VCT1-VTC3-VTC4 subcomplex is mostly found on the vacuolar membrane. The VTC1-VTC2-VCT4 subcomplex is observed in the cell periphery, probably ER and nuclear envelope, but localizes to the vacuole under phosphate starvation. Each subunit contains 3 transmembrane helices. VTC1 is a small membrane protein without hydrophilic domain. VTC2, VTC3 and VTC4 are related and have 2 hydrophilic domains that face the cytosol, an N-terminal SPX domain and the central core domain. The central core in VTC4 is the catalytic domain, with the essential catalytic lysine replaced by isoleucine and leucine in VTC2 and VTC3, respectively. The core complex associates with the accessory subunit VTC5. The complex interacts with the v-SNARE NYV1 and with the V(0) subunit of V-ATPase VPH1. Mn(2+) is required as a cofactor.

The protein resides in the vacuole membrane. The protein localises to the cytoplasm. Its subcellular location is the cell cortex. It localises to the endoplasmic reticulum membrane. It is found in the cytoplasmic vesicle. The protein resides in the autophagosome membrane. It carries out the reaction [phosphate](n) + ATP = [phosphate](n+1) + ADP. With respect to regulation, activity of the enzyme is Mn(2+)-dependent and enhanced in the presence of pyrophosphate (PPi). Functionally, catalytic subunit of the vacuolar transporter chaperone (VTC) complex. The VTC complex acts as a vacuolar polyphosphate polymerase that catalyzes the synthesis of inorganic polyphosphate (polyP) via transfer of phosphate from ATP to a growing polyP chain, releasing ADP. VTC exposes its catalytic domain VTC4 to the cytosol, where the growing polyP chain winds through a tunnel-shaped pocket, integrating cytoplasmic polymer synthesis with polyP membrane translocation. The VTC complex carries 9 vacuolar transmembrane domains, which are likely to constitute the translocation channel into the organelle lumen. PolyP synthesis is tightly coupled to its transport into the vacuole lumen, in order to avoid otherwise toxic intermediates in the cytosol, and it depends on the proton gradient across the membrane, formed by V-ATPase. The VTC complex also plays a role in vacuolar membrane fusion. Required for SEC18/NSF activity in SNARE priming, membrane binding of LMA1 and V(0) trans-complex formation. Binds inositol hexakisphosphate (Ins6P) and similar inositol polyphosphates, such as 5-diphospho-inositol pentakisphosphate (5-InsP7); these are important intracellular signaling molecules. Inositol polyphosphate binding promotes vacuolar polyphosphate synthesis. The VTC complex is required for microautophagy. It is a constituent of autophagic tubes and is required for scission of microautophagic vesicles from these tubes. This Saccharomyces cerevisiae (strain ATCC 204508 / S288c) (Baker's yeast) protein is Vacuolar transporter chaperone complex subunit 4.